Reading from the N-terminus, the 145-residue chain is Arginine repressor (145 aa).

Belongs to the ArgR family.

Its subcellular location is the cytoplasm. It functions in the pathway amino-acid biosynthesis; L-arginine biosynthesis [regulation]. Its function is as follows. Regulates arginine biosynthesis genes. This is Arginine repressor from Streptococcus mutans serotype c (strain ATCC 700610 / UA159).